The sequence spans 209 residues: Orotate phosphoribosyltransferase (209 aa).

Residues Arg96, Lys100, His102, and 122–130 contribute to the 5-phospho-alpha-D-ribose 1-diphosphate site; that span reads EDLISTGGS. Ser126 lines the orotate pocket.

This sequence belongs to the purine/pyrimidine phosphoribosyltransferase family. PyrE subfamily. In terms of assembly, homodimer. Requires Mg(2+) as cofactor.

The enzyme catalyses orotidine 5'-phosphate + diphosphate = orotate + 5-phospho-alpha-D-ribose 1-diphosphate. It functions in the pathway pyrimidine metabolism; UMP biosynthesis via de novo pathway; UMP from orotate: step 1/2. In terms of biological role, catalyzes the transfer of a ribosyl phosphate group from 5-phosphoribose 1-diphosphate to orotate, leading to the formation of orotidine monophosphate (OMP). The sequence is that of Orotate phosphoribosyltransferase from Lactococcus lactis subsp. cremoris (strain MG1363).